The chain runs to 469 residues: Ribulose bisphosphate carboxylase large chain (469 aa).

The substrate site is built by Asn-115 and Thr-165. Lys-167 acts as the Proton acceptor in catalysis. Lys-169 is a binding site for substrate. 3 residues coordinate Mg(2+): Lys-193, Asp-195, and Glu-196. Lys-193 carries the N6-carboxylysine modification. His-286 (proton acceptor) is an active-site residue. Residues Arg-287, His-319, and Ser-371 each coordinate substrate.

Belongs to the RuBisCO large chain family. Type I subfamily. In terms of assembly, heterohexadecamer of 8 large chains and 8 small chains. Mg(2+) serves as cofactor.

The protein resides in the plastid. Its subcellular location is the organellar chromatophore. It carries out the reaction 2 (2R)-3-phosphoglycerate + 2 H(+) = D-ribulose 1,5-bisphosphate + CO2 + H2O. The enzyme catalyses D-ribulose 1,5-bisphosphate + O2 = 2-phosphoglycolate + (2R)-3-phosphoglycerate + 2 H(+). Functionally, ruBisCO catalyzes two reactions: the carboxylation of D-ribulose 1,5-bisphosphate, the primary event in carbon dioxide fixation, as well as the oxidative fragmentation of the pentose substrate. Both reactions occur simultaneously and in competition at the same active site. This is Ribulose bisphosphate carboxylase large chain from Paulinella chromatophora.